The primary structure comprises 199 residues: Recombination protein RecR (199 aa).

The C4-type zinc finger occupies 57 to 72; that stretch reads CSICGNITDEDPCAIC. One can recognise a Toprim domain in the interval 80 to 176; the sequence is STILVVEQPK…KVTRLAHGLS (97 aa).

Belongs to the RecR family.

In terms of biological role, may play a role in DNA repair. It seems to be involved in an RecBC-independent recombinational process of DNA repair. It may act with RecF and RecO. The polypeptide is Recombination protein RecR (Lacticaseibacillus casei (strain BL23) (Lactobacillus casei)).